A 118-amino-acid polypeptide reads, in one-letter code: Protein TusC (118 aa).

It belongs to the DsrF/TusC family. In terms of assembly, heterohexamer, formed by a dimer of trimers. The hexameric TusBCD complex contains 2 copies each of TusB, TusC and TusD. The TusBCD complex interacts with TusE.

The protein localises to the cytoplasm. Its function is as follows. Part of a sulfur-relay system required for 2-thiolation of 5-methylaminomethyl-2-thiouridine (mnm(5)s(2)U) at tRNA wobble positions. The polypeptide is Protein TusC (Salmonella agona (strain SL483)).